The chain runs to 907 residues: Dual serine/threonine and tyrosine protein kinase (907 aa).

A coiled-coil region spans residues 373–409; the sequence is RKKENELYESLMNIANRKQEEMKDMIVETLNTMKEEL. The Protein kinase domain occupies 630–884; sequence PKLGQELGRG…PLLGIVQPML (255 aa). Residues 636 to 644 and K659 contribute to the ATP site; that span reads LGRGQYGVV. D755 serves as the catalytic Proton acceptor.

Belongs to the protein kinase superfamily. Ser/Thr protein kinase family.

It is found in the cytoplasm. The protein resides in the cell membrane. The protein localises to the apical cell membrane. It localises to the basolateral cell membrane. Its subcellular location is the cell junction. The catalysed reaction is L-seryl-[protein] + ATP = O-phospho-L-seryl-[protein] + ADP + H(+). It catalyses the reaction L-threonyl-[protein] + ATP = O-phospho-L-threonyl-[protein] + ADP + H(+). The enzyme catalyses L-tyrosyl-[protein] + ATP = O-phospho-L-tyrosyl-[protein] + ADP + H(+). Functionally, acts as a positive regulator of ERK phosphorylation downstream of fibroblast growth factor-receptor activation. Involved in the regulation of both caspase-dependent apoptosis and caspase-independent cell death. In the skin, it plays a predominant role in suppressing caspase-dependent apoptosis in response to UV stress in a range of dermal cell types. This is Dual serine/threonine and tyrosine protein kinase from Macaca mulatta (Rhesus macaque).